We begin with the raw amino-acid sequence, 221 residues long: MSDPAVETAPVAVASPGKAKKEKKPKSDKPKKPKAPRTHPPVSEMVFNAVKTLKERGGSSLQAIKKFLIAQYKVDVDKLDTFIKKYLKSAVEKGQLLQTKGKGALGSFKLPAAAKKEKVVKKTEKKPKKAAAKPSKAGEKKVKKTIAKKPKAATATKIKKPVAKTTKKPAAAKPAAKKAAPKPKAAPKPKAAPKPKKAAAPKAKKPAAKPKAAKKPAAKKA.

2 disordered regions span residues 1–43 (MSDP…PPVS) and 113–221 (AAKK…AKKA). One can recognise an H15 domain in the interval 38–112 (THPPVSEMVF…GALGSFKLPA (75 aa)). Basic residues-rich tracts occupy residues 141-167 (KVKK…KTTK) and 175-221 (AAKK…AKKA).

The protein belongs to the histone H1/H5 family.

The protein resides in the nucleus. Its subcellular location is the chromosome. Its function is as follows. Histones H1 are necessary for the condensation of nucleosome chains into higher-order structures. The sequence is that of Histone H1C from Chironomus tentans (Midge).